Consider the following 572-residue polypeptide: [Pyruvate dehydrogenase [acetyl-transferring]]-phosphatase 1, mitochondrial (572 aa).

Residues 95–122 (NTSGNINMPSPNPKGTETQKSQRSQNDQ) are disordered. One can recognise a PPM-type phosphatase domain in the interval 153 to 543 (RYDVAQLPSN…DDLTVTVAFF (391 aa)). Residues D197, G198, D424, and D480 each coordinate Mn(2+). A compositionally biased stretch (basic and acidic residues) spans 470–480 (EAQRPAFRYKD). The disordered stretch occupies residues 470-492 (EAQRPAFRYKDNNSSSPSGSNPE). A compositionally biased stretch (low complexity) spans 481–491 (NNSSSPSGSNP).

It belongs to the PP2C family. It depends on Mg(2+) as a cofactor. The cofactor is Mn(2+). In terms of processing, processed by mitochondrial inner membrane protease (IMP) complex and released to the intermembrane space.

The protein resides in the mitochondrion intermembrane space. It carries out the reaction O-phospho-L-seryl-[pyruvate dehydrogenase E1 alpha subunit] + H2O = L-seryl-[pyruvate dehydrogenase E1 alpha subunit] + phosphate. Functionally, catalyzes the dephosphorylation and concomitant reactivation of the E1 alpha subunit (PDA1) of the pyruvate dehydrogenase complex. This is [Pyruvate dehydrogenase [acetyl-transferring]]-phosphatase 1, mitochondrial (PTC5) from Saccharomyces cerevisiae (strain ATCC 204508 / S288c) (Baker's yeast).